Here is a 184-residue protein sequence, read N- to C-terminus: Lipocalin-15 (184 aa).

The first 20 residues, 1–20, serve as a signal peptide directing secretion; the sequence is MMSFLLGAILTLLWAPTAQA. The cysteines at positions 83 and 176 are disulfide-linked.

This sequence belongs to the calycin superfamily. Lipocalin family.

It is found in the secreted. This chain is Lipocalin-15 (LCN15), found in Homo sapiens (Human).